Consider the following 352-residue polypeptide: DNA integrity scanning protein DisA (352 aa).

Residues 3 to 143 (PQELIEKIKL…NYKYVVNQVD (141 aa)) enclose the DAC domain. ATP-binding positions include Gly71, Leu89, and 102–106 (TRHRT).

The protein belongs to the DisA family. In terms of assembly, homooctamer. It depends on Mg(2+) as a cofactor.

The catalysed reaction is 2 ATP = 3',3'-c-di-AMP + 2 diphosphate. Participates in a DNA-damage check-point. DisA forms globular foci that rapidly scan along the chromosomes searching for lesions. In terms of biological role, also has diadenylate cyclase activity, catalyzing the condensation of 2 ATP molecules into cyclic di-AMP (c-di-AMP). c-di-AMP likely acts as a signaling molecule that may couple DNA integrity with a cellular process. The sequence is that of DNA integrity scanning protein DisA from Thermotoga neapolitana (strain ATCC 49049 / DSM 4359 / NBRC 107923 / NS-E).